The primary structure comprises 564 residues: CTP synthase (564 aa).

Positions 1–265 (MTKFVFVTGG…DEIVCHRLDI (265 aa)) are amidoligase domain. Serine 13 contacts CTP. UTP is bound at residue serine 13. Residues 14–19 (SLGKGI) and aspartate 71 each bind ATP. Mg(2+) is bound by residues aspartate 71 and glutamate 139. CTP-binding positions include 146-148 (DIE), 186-191 (KTKPTQ), and lysine 222. Residues 186-191 (KTKPTQ) and lysine 222 each bind UTP. Positions 290–543 (SIALVGKYVD…IQAAISFAGQ (254 aa)) constitute a Glutamine amidotransferase type-1 domain. An L-glutamine-binding site is contributed by glycine 351. Cysteine 378 (nucleophile; for glutamine hydrolysis) is an active-site residue. Residues 379-382 (LGMQ), glutamate 402, and arginine 469 contribute to the L-glutamine site. Catalysis depends on residues histidine 516 and glutamate 518.

The protein belongs to the CTP synthase family. As to quaternary structure, homotetramer.

It catalyses the reaction UTP + L-glutamine + ATP + H2O = CTP + L-glutamate + ADP + phosphate + 2 H(+). It carries out the reaction L-glutamine + H2O = L-glutamate + NH4(+). The enzyme catalyses UTP + NH4(+) + ATP = CTP + ADP + phosphate + 2 H(+). The protein operates within pyrimidine metabolism; CTP biosynthesis via de novo pathway; CTP from UDP: step 2/2. Allosterically activated by GTP, when glutamine is the substrate; GTP has no effect on the reaction when ammonia is the substrate. The allosteric effector GTP functions by stabilizing the protein conformation that binds the tetrahedral intermediate(s) formed during glutamine hydrolysis. Inhibited by the product CTP, via allosteric rather than competitive inhibition. In terms of biological role, catalyzes the ATP-dependent amination of UTP to CTP with either L-glutamine or ammonia as the source of nitrogen. Regulates intracellular CTP levels through interactions with the four ribonucleotide triphosphates. This Nitrosomonas europaea (strain ATCC 19718 / CIP 103999 / KCTC 2705 / NBRC 14298) protein is CTP synthase.